We begin with the raw amino-acid sequence, 333 residues long: Ketol-acid reductoisomerase (NADP(+)) (333 aa).

The region spanning 2–182 (AELFYDDDAD…GGTRAGVIKT (181 aa)) is the KARI N-terminal Rossmann domain. NADP(+) contacts are provided by residues 25-28 (YGSQ), S51, S53, and 83-86 (DPIQ). Residue H108 is part of the active site. G134 lines the NADP(+) pocket. The 146-residue stretch at 183-328 (TFTEETETDL…RELRKLMSWV (146 aa)) folds into the KARI C-terminal knotted domain. D191, E195, E227, and E231 together coordinate Mg(2+). S252 is a binding site for substrate.

This sequence belongs to the ketol-acid reductoisomerase family. Requires Mg(2+) as cofactor.

It catalyses the reaction (2R)-2,3-dihydroxy-3-methylbutanoate + NADP(+) = (2S)-2-acetolactate + NADPH + H(+). The catalysed reaction is (2R,3R)-2,3-dihydroxy-3-methylpentanoate + NADP(+) = (S)-2-ethyl-2-hydroxy-3-oxobutanoate + NADPH + H(+). It functions in the pathway amino-acid biosynthesis; L-isoleucine biosynthesis; L-isoleucine from 2-oxobutanoate: step 2/4. The protein operates within amino-acid biosynthesis; L-valine biosynthesis; L-valine from pyruvate: step 2/4. Functionally, involved in the biosynthesis of branched-chain amino acids (BCAA). Catalyzes an alkyl-migration followed by a ketol-acid reduction of (S)-2-acetolactate (S2AL) to yield (R)-2,3-dihydroxy-isovalerate. In the isomerase reaction, S2AL is rearranged via a Mg-dependent methyl migration to produce 3-hydroxy-3-methyl-2-ketobutyrate (HMKB). In the reductase reaction, this 2-ketoacid undergoes a metal-dependent reduction by NADPH to yield (R)-2,3-dihydroxy-isovalerate. The polypeptide is Ketol-acid reductoisomerase (NADP(+)) (Streptomyces griseus subsp. griseus (strain JCM 4626 / CBS 651.72 / NBRC 13350 / KCC S-0626 / ISP 5235)).